The primary structure comprises 120 residues: Large ribosomal subunit protein uL18 (120 aa).

It belongs to the universal ribosomal protein uL18 family. Part of the 50S ribosomal subunit; part of the 5S rRNA/L5/L18/L25 subcomplex. Contacts the 5S and 23S rRNAs.

In terms of biological role, this is one of the proteins that bind and probably mediate the attachment of the 5S RNA into the large ribosomal subunit, where it forms part of the central protuberance. This is Large ribosomal subunit protein uL18 from Geobacillus thermodenitrificans (strain NG80-2).